A 1030-amino-acid polypeptide reads, in one-letter code: Protein phosphatase 1 regulatory subunit 12A (1030 aa).

The KVKF motif motif lies at 35–38 (KVKF). 6 ANK repeats span residues 39–68 (DDGA…DINY), 72–101 (DGLT…NINQ), 105–134 (EGWI…HVGA), 138–164 (EGDT…RQGV), 198–227 (SGGT…DVNI), and 231–260 (DGWT…DMEM). Residues N67 and N100 each carry the (3S)-3-hydroxyasparagine; by HIF1AN; partial modification. At N226 the chain carries (3S)-3-hydroxyasparagine; by HIF1AN; partial. 2 disordered regions span residues 290 to 628 (LHSE…SVPT) and 643 to 928 (ASTT…EKDD). A compositionally biased stretch (basic and acidic residues) spans 291 to 300 (HSEKRDKKSP). A Phosphoserine modification is found at S299. Polar residues predominate over residues 302–316 (IESTANMDNNQSQKT). The span at 318-340 (KNKETLIIEPEKNASRIESLEQE) shows a compositional bias: basic and acidic residues. Positions 357–369 (SEEDEEDDSESEA) are enriched in acidic residues. Residues 385-402 (TSSTQAAPVAVTTPTVSS) are compositionally biased toward low complexity. A phosphoserine mark is found at S422 and S432. A compositionally biased stretch (basic and acidic residues) spans 422 to 432 (SPKEEERKDES). At T443 the chain carries Phosphothreonine. S445 carries the post-translational modification Phosphoserine; by NUAK1. Y446 is modified (phosphotyrosine). Residues 469 to 480 (RSASSPRLSSSL) are compositionally biased toward low complexity. Phosphoserine; by NUAK1 is present on S472. S473 carries the phosphoserine; by CDK1 modification. S477 carries the phosphoserine modification. The span at 481–491 (DNKEKEKDSKG) shows a compositional bias: basic and acidic residues. Phosphoserine is present on residues S507 and S509. Polar residues predominate over residues 540 to 551 (NSSVNEGSTYHK). A compositionally biased stretch (low complexity) spans 564-610 (SSSVPSTTSTPTVTSAAGLQKSLLSSTSTTTKITTGSSSAGTQSSTS). A phosphoserine mark is found at S601 and S618. Basic and acidic residues predominate over residues 614-625 (WAEDSTEKEKDS). Residues 643–660 (ASTTTLTTTTAGTVSSTT) show a composition bias toward low complexity. Residues 673–682 (VRDEESESQR) are compositionally biased toward basic and acidic residues. The tract at residues 682–864 (RKARSRQARQ…VSFWTQDSDE (183 aa)) is interaction with ROCK2. Residues 683 to 693 (KARSRQARQSR) show a composition bias toward basic residues. 2 positions are modified to phosphoserine; by PKA and PKG; in vitro: S692 and S695. The residue at position 696 (T696) is a Phosphothreonine; by ROCK1, ROCK2, CDC42BP, ZIPK/DAPK3 and RAF1. Basic and acidic residues predominate over residues 718–767 (RTREQENEEKEKEEKEKQDKEKQEEKKESETSREDEYKQKYSRTYDETYQ). Positions 773–795 (STSSSTTPSSSLSTMSSSLYASS) are enriched in low complexity. A compositionally biased stretch (polar residues) spans 796-810 (QLNRPNSLVGITSAY). S802 carries the phosphoserine modification. Positions 814–840 (ITKENEREGEKREEEKEGEDKSQPKSI) are enriched in basic and acidic residues. Over residues 841–852 (RERRRPREKRRS) the composition is skewed to basic residues. Phosphoserine; by ROCK2 is present on S852. The segment covering 861-875 (DSDENEQEQQSDTEE) has biased composition (acidic residues). Phosphoserine is present on residues S862 and S871. Positions 884–897 (TDSISRYETSSTSA) are enriched in polar residues. A phosphoserine mark is found at S903 and S908. The segment covering 903–913 (SLLGRSGSYSY) has biased composition (low complexity). S910 carries the post-translational modification Phosphoserine; by NUAK1. Residues 914 to 928 (LEERKPYSSRLEKDD) show a composition bias toward basic and acidic residues. Phosphoserine is present on S995.

PP1 comprises a catalytic subunit, PPP1CA, PPP1CB or PPP1CC, and one or several targeting or regulatory subunits. PPP1R12A mediates binding to myosin. Interacts with ARHA and CIT. Binds PPP1R12B, ROCK1 and IL16. Interacts directly with PRKG1. Non-covalent dimer of 2 dimers; PRKG1-PRKG1 and PPP1R12A-PPP1R12A. Interacts with SMTNL1. Interacts with PPP1CB; the interaction is direct. Interacts (when phosphorylated at Ser-445, Ser-472 and Ser-910) with 14-3-3. Interacts with ROCK1 and ROCK2. Interacts with isoform 1 and isoform 2 of ZIPK/DAPK3. Interacts with RAF1. Interacts with HIF1AN. Interacts with NCKAP1L. Phosphorylated by CIT (Rho-associated kinase). Phosphorylated cooperatively by ROCK1 and CDC42BP on Thr-696. Phosphorylated on upon DNA damage, probably by ATM or ATR. In vitro, phosphorylation of Ser-695 by PKA and PKG appears to prevent phosphorylation of the inhibitory site Thr-696, probably mediated by PRKG1. Phosphorylation at Ser-445, Ser-472 and Ser-910 by NUAK1 promotes interaction with 14-3-3, leading to inhibit interaction with myosin light chain MLC2, preventing dephosphorylation of MLC2. May be phosphorylated at Thr-696 by DMPK; may inhibit the myosin phosphatase activity. Phosphorylated at Ser-473 by CDK1 during mitosis, creating docking sites for the POLO box domains of PLK1. Subsequently, PLK1 binds and phosphorylates PPP1R12A. Expressed in striated muscles, specifically in type 2a fibers (at protein level).

Its subcellular location is the cytoplasm. It localises to the cytoskeleton. The protein resides in the stress fiber. In terms of biological role, key regulator of protein phosphatase 1C (PPP1C). Mediates binding to myosin. As part of the PPP1C complex, involved in dephosphorylation of PLK1. Capable of inhibiting HIF1AN-dependent suppression of HIF1A activity. The chain is Protein phosphatase 1 regulatory subunit 12A from Homo sapiens (Human).